Consider the following 435-residue polypeptide: Keratin, type I cytoskeletal 18 (435 aa).

The interval 2–84 is head; that stretch reads SYRPGSYSVS…SVSGSGLVGN (83 aa). The coil 1A stretch occupies residues 85–120; it reads EKETMIGLNDRLAAYLETVRNLEQANSKLEFQIREA. The IF rod domain maps to 85–396; the sequence is EKETMIGLND…RLLDGEDFRL (312 aa). Positions 121-137 are linker 1; sequence LEKKGPTTRDLSPFEKT. The coil 1B stretch occupies residues 138–229; sequence LEDLRKKVYD…QNHNQEVNDL (92 aa). The segment at 230-253 is linker 12; the sequence is RNQIAQSGVQVDVDAPKGQDLAQV. The segment at 254-391 is coil 2; the sequence is LAEVRAQYES…IATYRRLLDG (138 aa). Positions 392–435 are tail; that stretch reads EDFRLQDALVDQSSTKSIKKVTVTQTLVDGKVVSESTNTKEIGK.

This sequence belongs to the intermediate filament family. In terms of assembly, heterotetramer of two type I and two type II keratins. Keratin-18 associates with keratin-8. Phosphorylated. In terms of processing, proteolytically cleaved by caspases during epithelial cell apoptosis.

Functionally, when phosphorylated, plays a role in filament reorganization. The chain is Keratin, type I cytoskeletal 18 from Acipenser baerii (Siberian sturgeon).